The following is a 1178-amino-acid chain: Leucine--tRNA ligase, cytoplasmic (1178 aa).

Residues tyrosine 54 and tyrosine 56 each contribute to the L-leucine site. Residues 62–65 (HLGH) carry the 'HIGH' region motif. Serine 169 carries the post-translational modification Phosphoserine. Residues 262–511 (GPQEYTLVKL…DAGDALIYME (250 aa)) are editing domain. L-leucine-binding residues include leucine 596 and serine 599. Residues 718–722 (KMSKS) carry the 'KMSKS' region motif. Residue lysine 721 coordinates ATP. Serine 722 carries the phosphoserine modification. 2 positions are modified to N6-acetyllysine: lysine 972 and lysine 1049.

It belongs to the class-I aminoacyl-tRNA synthetase family.

Its subcellular location is the cytoplasm. The catalysed reaction is tRNA(Leu) + L-leucine + ATP = L-leucyl-tRNA(Leu) + AMP + diphosphate. The enzyme catalyses L-methionyl-tRNA(Leu) + H2O = tRNA(Leu) + L-methionine + H(+). Its activity is regulated as follows. 5-fluoro-1,3-dihydro-1-hydroxy-1,2-benzoxaborole inhibits LARS1 by forming a covalent adduct with the 3' adenosine of tRNA(Leu) at the editing site, thus locking the enzyme in an inactive conformation. In terms of biological role, aminoacyl-tRNA synthetase that catalyzes the specific attachment of leucine to its cognate tRNA (tRNA(Leu)). It performs tRNA aminoacylation in a two-step reaction: Leu is initially activated by ATP to form a leucyl-adenylate (Leu-AMP) intermediate; then the leucyl moiety is transferred to the acceptor 3' end of the tRNA to yield leucyl-tRNA. To improve the fidelity of catalytic reactions, it is also able to hydrolyze misactivated aminoacyl-adenylate intermediates (pre-transfer editing) and mischarged aminoacyl-tRNAs (post-transfer editing). This is Leucine--tRNA ligase, cytoplasmic (Lars1) from Mus musculus (Mouse).